Consider the following 83-residue polypeptide: Homeobox protein DLX-2 (83 aa).

A compositionally biased stretch (polar residues) spans 1-14 (STATDSSYYTNQQH). 2 disordered regions span residues 1–27 (STAT…SPYA) and 63–83 (PYGT…LEPE).

The protein belongs to the distal-less homeobox family. As to quaternary structure, interacts (via homeobox DNA-binding domain) with POU4F2; this interaction enhances retinal ganglion cell (RGC) differentiation.

The protein localises to the nucleus. Its function is as follows. Acts as a transcriptional activator. Activates transcription of CGA/alpha-GSU, via binding to the downstream activin regulatory element (DARE) in the gene promoter. Plays a role in terminal differentiation of interneurons, such as amacrine and bipolar cells in the developing retina. Likely to play a regulatory role in the development of the ventral forebrain. May play a role in craniofacial patterning and morphogenesis. This Rattus norvegicus (Rat) protein is Homeobox protein DLX-2 (Dlx2).